The following is a 492-amino-acid chain: Trehalose-6-phosphate synthase (492 aa).

Arg-25 contributes to the D-glucose 6-phosphate binding site. Residue 45 to 46 coordinates UDP-alpha-D-glucose; it reads GG. Residues Tyr-101 and Asp-155 each coordinate D-glucose 6-phosphate. 2 residues coordinate UDP-alpha-D-glucose: Arg-297 and Lys-302. Arg-335 serves as a coordination point for D-glucose 6-phosphate. 400–404 is a UDP-alpha-D-glucose binding site; that stretch reads LVAKE.

Belongs to the glycosyltransferase 20 family. In terms of assembly, homotetramer.

The enzyme catalyses ADP-alpha-D-glucose + D-glucose 6-phosphate = alpha,alpha-trehalose 6-phosphate + ADP + H(+). The catalysed reaction is CDP-alpha-D-glucose + D-glucose 6-phosphate = alpha,alpha-trehalose 6-phosphate + CDP + H(+). It catalyses the reaction GDP-alpha-D-glucose + D-glucose 6-phosphate = alpha,alpha-trehalose 6-phosphate + GDP + H(+). It carries out the reaction TDP-alpha-D-glucose + D-glucose 6-phosphate = 5-methyl-UDP + alpha,alpha-trehalose 6-phosphate + H(+). The enzyme catalyses D-glucose 6-phosphate + UDP-alpha-D-glucose = alpha,alpha-trehalose 6-phosphate + UDP + H(+). It participates in glycan biosynthesis; trehalose biosynthesis. Functionally, probably involved in the osmoprotection via the biosynthesis of trehalose and in the production of glycogen and alpha-glucan via the TreS-Pep2 branch involved in the biosynthesis of maltose-1-phosphate (M1P). Catalyzes the transfer of glucose from UDP-glucose (UDP-Glc) to D-glucose 6-phosphate (Glc-6-P) to form trehalose-6-phosphate. Probably also able to use ADP-Glc, CDP-Glc, GDP-Glc and TDP-Glc as glucosyl donors. The polypeptide is Trehalose-6-phosphate synthase (Mycolicibacterium paratuberculosis (strain ATCC BAA-968 / K-10) (Mycobacterium paratuberculosis)).